Here is a 76-residue protein sequence, read N- to C-terminus: uncharacterized protein (76 aa).

3 helical membrane-spanning segments follow: residues 2–22, 28–48, and 56–76; these read LKVAKISVSCIVLVLCIYSLF, LLIVVQLFVAALLSLVGVEAI, and EYLLFGSAAFLLVVNGVKFII.

It is found in the cell membrane. This is an uncharacterized protein from Bacillus subtilis (strain 168).